Reading from the N-terminus, the 160-residue chain is 3-dehydroquinate dehydratase (160 aa).

The active-site Proton acceptor is the Y22. The substrate site is built by N73, H79, and D86. Catalysis depends on H99, which acts as the Proton donor. Substrate is bound by residues 100–101 (IS) and R110.

This sequence belongs to the type-II 3-dehydroquinase family. As to quaternary structure, homododecamer.

The catalysed reaction is 3-dehydroquinate = 3-dehydroshikimate + H2O. The protein operates within metabolic intermediate biosynthesis; chorismate biosynthesis; chorismate from D-erythrose 4-phosphate and phosphoenolpyruvate: step 3/7. Functionally, catalyzes a trans-dehydration via an enolate intermediate. This Sulfurimonas denitrificans (strain ATCC 33889 / DSM 1251) (Thiomicrospira denitrificans (strain ATCC 33889 / DSM 1251)) protein is 3-dehydroquinate dehydratase.